The primary structure comprises 744 residues: Phosphoribosylformylglycinamidine synthase subunit PurL (744 aa).

H49 is a catalytic residue. Y52 and K91 together coordinate ATP. E93 provides a ligand contact to Mg(2+). Residues 94 to 97 and R116 each bind substrate; that span reads SHNH. Catalysis depends on H95, which acts as the Proton acceptor. D117 is a binding site for Mg(2+). Residue Q240 coordinates substrate. D268 lines the Mg(2+) pocket. Residue 312-314 coordinates substrate; the sequence is ESQ. Residues D493 and G530 each contribute to the ATP site. Residue N531 participates in Mg(2+) binding. Substrate is bound at residue S533.

Belongs to the FGAMS family. As to quaternary structure, monomer. Part of the FGAM synthase complex composed of 1 PurL, 1 PurQ and 2 PurS subunits.

The protein localises to the cytoplasm. It carries out the reaction N(2)-formyl-N(1)-(5-phospho-beta-D-ribosyl)glycinamide + L-glutamine + ATP + H2O = 2-formamido-N(1)-(5-O-phospho-beta-D-ribosyl)acetamidine + L-glutamate + ADP + phosphate + H(+). The protein operates within purine metabolism; IMP biosynthesis via de novo pathway; 5-amino-1-(5-phospho-D-ribosyl)imidazole from N(2)-formyl-N(1)-(5-phospho-D-ribosyl)glycinamide: step 1/2. In terms of biological role, part of the phosphoribosylformylglycinamidine synthase complex involved in the purines biosynthetic pathway. Catalyzes the ATP-dependent conversion of formylglycinamide ribonucleotide (FGAR) and glutamine to yield formylglycinamidine ribonucleotide (FGAM) and glutamate. The FGAM synthase complex is composed of three subunits. PurQ produces an ammonia molecule by converting glutamine to glutamate. PurL transfers the ammonia molecule to FGAR to form FGAM in an ATP-dependent manner. PurS interacts with PurQ and PurL and is thought to assist in the transfer of the ammonia molecule from PurQ to PurL. This Nitrobacter hamburgensis (strain DSM 10229 / NCIMB 13809 / X14) protein is Phosphoribosylformylglycinamidine synthase subunit PurL.